The chain runs to 317 residues: Flavin-dependent thymidylate synthase (317 aa).

Residue Ser-46 participates in FAD binding. The tract at residues 55–166 (FEWKKEKWIE…ELETDMDFYT (112 aa)) is insert. Residues 100 to 317 (AVKERIKEAF…YRGTDKKNVI (218 aa)) form the ThyX domain. DUMP contacts are provided by residues 178 to 181 (QWMR), 189 to 193 (EVSKR), and Arg-259. FAD is bound by residues 181 to 183 (RHR) and Glu-189. The short motif at 181–191 (RHRFGSYNEVS) is the ThyX motif element. Asn-281 provides a ligand contact to FAD. Position 286 (Arg-286) interacts with dUMP. Residue Arg-286 is the Involved in ionization of N3 of dUMP, leading to its activation of the active site.

Belongs to the thymidylate synthase ThyX family. In terms of assembly, homotetramer. FAD is required as a cofactor.

The catalysed reaction is dUMP + (6R)-5,10-methylene-5,6,7,8-tetrahydrofolate + NADPH + H(+) = dTMP + (6S)-5,6,7,8-tetrahydrofolate + NADP(+). It participates in pyrimidine metabolism; dTTP biosynthesis. In terms of biological role, catalyzes the reductive methylation of 2'-deoxyuridine-5'-monophosphate (dUMP) to 2'-deoxythymidine-5'-monophosphate (dTMP) while utilizing 5,10-methylenetetrahydrofolate (mTHF) as the methyl donor, and NADPH and FADH(2) as the reductant. The sequence is that of Flavin-dependent thymidylate synthase from Aquifex aeolicus (strain VF5).